The chain runs to 1412 residues: DNA-directed RNA polymerase subunit beta' (1412 aa).

Positions 543, 545, and 547 each coordinate Mg(2+). Residues C1017, C1092, C1099, and C1102 each contribute to the Zn(2+) site.

This sequence belongs to the RNA polymerase beta' chain family. As to quaternary structure, the RNAP catalytic core consists of 2 alpha, 1 beta, 1 beta' and 1 omega subunit. When a sigma factor is associated with the core the holoenzyme is formed, which can initiate transcription. The cofactor is Mg(2+). Zn(2+) serves as cofactor.

It catalyses the reaction RNA(n) + a ribonucleoside 5'-triphosphate = RNA(n+1) + diphosphate. In terms of biological role, DNA-dependent RNA polymerase catalyzes the transcription of DNA into RNA using the four ribonucleoside triphosphates as substrates. In Mesomycoplasma hyopneumoniae (strain 232) (Mycoplasma hyopneumoniae), this protein is DNA-directed RNA polymerase subunit beta'.